Consider the following 500-residue polypeptide: NAD(P)H-quinone oxidoreductase chain 4, chloroplastic (500 aa).

Helical transmembrane passes span 4 to 24, 35 to 55, 87 to 107, 111 to 131, 134 to 154, 167 to 187, 211 to 231, 242 to 262, 274 to 294, 313 to 333, 334 to 354, 386 to 406, 417 to 437, and 462 to 482; these read FPWLTILVVLPIFAGSLIFFL, YTIAICLLEFLIMTYAFCYHF, LGSILLTGFITTLATLAAWPV, SQLFYFLMLAMYSGQIGLFSS, LLLFFIMWELELIPVYLLLSM, FILYTAGGSIFFLIGVLGMGL, ILLYFGFLIAYAVKLPIIPLH, HYSTCMLLAGILLKMGAYGLI, YLFSPWLVIIGAVQIIYAALT, MGFIIIGIGSITNIGLNGAIL, QILSHGFIGATLFFLAGTACD, LALPGMSGFVAELVVFFGLIT, LITFVMAIGMILTPIYLLSML, and LFLLICIFLPVIGIGIYPDFV.

This sequence belongs to the complex I subunit 4 family.

It is found in the plastid. The protein resides in the chloroplast thylakoid membrane. It catalyses the reaction a plastoquinone + NADH + (n+1) H(+)(in) = a plastoquinol + NAD(+) + n H(+)(out). The enzyme catalyses a plastoquinone + NADPH + (n+1) H(+)(in) = a plastoquinol + NADP(+) + n H(+)(out). The protein is NAD(P)H-quinone oxidoreductase chain 4, chloroplastic of Saccharum hybrid (Sugarcane).